A 354-amino-acid polypeptide reads, in one-letter code: Ferrochelatase (354 aa).

Fe cation is bound by residues H204 and E306.

The protein belongs to the ferrochelatase family.

It is found in the cytoplasm. It carries out the reaction heme b + 2 H(+) = protoporphyrin IX + Fe(2+). The protein operates within porphyrin-containing compound metabolism; protoheme biosynthesis; protoheme from protoporphyrin-IX: step 1/1. Its function is as follows. Catalyzes the ferrous insertion into protoporphyrin IX. The polypeptide is Ferrochelatase (Coxiella burnetii (strain CbuG_Q212) (Coxiella burnetii (strain Q212))).